A 260-amino-acid chain; its full sequence is Small ribosomal subunit protein uS2 (260 aa).

The protein belongs to the universal ribosomal protein uS2 family.

This chain is Small ribosomal subunit protein uS2, found in Streptococcus sanguinis (strain SK36).